We begin with the raw amino-acid sequence, 530 residues long: Phosphoenolpyruvate carboxykinase (ATP) (530 aa).

3 residues coordinate substrate: arginine 57, tyrosine 193, and lysine 199. ATP contacts are provided by residues lysine 199, histidine 218, and 234-242 (GLSGTGKTT). Mn(2+)-binding residues include lysine 199 and histidine 218. Aspartate 255 is a binding site for Mn(2+). Positions 283, 320, and 445 each coordinate ATP. Arginine 320 is a binding site for substrate.

The protein belongs to the phosphoenolpyruvate carboxykinase (ATP) family. Requires Mn(2+) as cofactor.

Its subcellular location is the cytoplasm. The enzyme catalyses oxaloacetate + ATP = phosphoenolpyruvate + ADP + CO2. The protein operates within carbohydrate biosynthesis; gluconeogenesis. Functionally, involved in the gluconeogenesis. Catalyzes the conversion of oxaloacetate (OAA) to phosphoenolpyruvate (PEP) through direct phosphoryl transfer between the nucleoside triphosphate and OAA. This Leptospira interrogans serogroup Icterohaemorrhagiae serovar copenhageni (strain Fiocruz L1-130) protein is Phosphoenolpyruvate carboxykinase (ATP).